Reading from the N-terminus, the 254-residue chain is Probable transcriptional regulatory protein HDEF_0869 (254 aa).

Residues 1-20 (MAGHSKWANTKHRKAAQDAK) form a disordered region.

This sequence belongs to the TACO1 family.

Its subcellular location is the cytoplasm. In Hamiltonella defensa subsp. Acyrthosiphon pisum (strain 5AT), this protein is Probable transcriptional regulatory protein HDEF_0869.